The primary structure comprises 2188 residues: Tiggrin (2188 aa).

Residues 1–18 (MRALGGITLLLAVAICQG) form the signal peptide. Coiled coils occupy residues 570 to 635 (SRLE…EHIK), 1009 to 1050 (LKNL…EIES), 1312 to 1343 (TFVE…EIEE), and 1613 to 1641 (KQQR…AQYH). Residues 1984-2188 (IFSKDRGDQP…FWEKLKEKLG (205 aa)) form a disordered region. The span at 1985–1998 (FSKDRGDQPPHTYD) shows a compositional bias: basic and acidic residues. Residues 1989–1991 (RGD) carry the Cell attachment site motif. A compositionally biased stretch (acidic residues) spans 2000–2009 (SFVEGDEPGL). Residues 2016-2033 (PRPPNPAPIVSTPKPPLP) show a composition bias toward pro residues. Composition is skewed to low complexity over residues 2057 to 2077 (GSAS…ASAS) and 2091 to 2101 (QQEVDLGQQQQ). A compositionally biased stretch (polar residues) spans 2115-2139 (GQQTQVEDTDWNQQAEDLGQQQQVQ). The segment covering 2148 to 2165 (QTQGHSSSSNSRSQPLQQ) has biased composition (low complexity). Residues 2179 to 2188 (FWEKLKEKLG) show a composition bias toward basic and acidic residues.

In terms of processing, O-glycosylation by pgant3 is required for proper secretion and localization to the basal cell layer interface during wing development. In embryos, expressed in the apodemes (muscle attachment sites) of the major longitudinal muscles 4, 6, 7, 12 and 13 and the wide dorsal oblique muscles 9 and 10, in hemocytes, in fat body cells, in basement membranes surrounding the gut and in the commissures of the ventral nerve cord. Expressed in larval imaginal wing disk and in pupal wing. In adult flies, expressed in the jump muscle (at protein level).

It localises to the secreted. It is found in the extracellular space. Its subcellular location is the extracellular matrix. Functionally, functions as a ligand for integrin alpha-PS2/beta-PS. Required in larvae for proper muscle structure and function. Involved in the regulation of cell adhesion during wing development. This is Tiggrin from Drosophila melanogaster (Fruit fly).